The chain runs to 71 residues: UPF0435 protein RBAM_008100 (71 aa).

This sequence belongs to the UPF0435 family.

The chain is UPF0435 protein RBAM_008100 from Bacillus velezensis (strain DSM 23117 / BGSC 10A6 / LMG 26770 / FZB42) (Bacillus amyloliquefaciens subsp. plantarum).